The primary structure comprises 141 residues: Large ribosomal subunit protein uL11 (141 aa).

The protein belongs to the universal ribosomal protein uL11 family. Part of the ribosomal stalk of the 50S ribosomal subunit. Interacts with L10 and the large rRNA to form the base of the stalk. L10 forms an elongated spine to which L12 dimers bind in a sequential fashion forming a multimeric L10(L12)X complex. In terms of processing, one or more lysine residues are methylated.

Forms part of the ribosomal stalk which helps the ribosome interact with GTP-bound translation factors. In Chlorobium phaeovibrioides (strain DSM 265 / 1930) (Prosthecochloris vibrioformis (strain DSM 265)), this protein is Large ribosomal subunit protein uL11.